Reading from the N-terminus, the 318-residue chain is tRNA pseudouridine synthase B (318 aa).

D47 functions as the Nucleophile in the catalytic mechanism.

The protein belongs to the pseudouridine synthase TruB family. Type 1 subfamily.

It catalyses the reaction uridine(55) in tRNA = pseudouridine(55) in tRNA. Responsible for synthesis of pseudouridine from uracil-55 in the psi GC loop of transfer RNAs. The protein is tRNA pseudouridine synthase B of Colwellia psychrerythraea (strain 34H / ATCC BAA-681) (Vibrio psychroerythus).